The primary structure comprises 471 residues: Adenosylhomocysteinase (471 aa).

Residues T60, D135, and E196 each coordinate substrate. An NAD(+)-binding site is contributed by 197–199; that stretch reads TTT. K226 and D230 together coordinate substrate. Residues N231, 260-265, E283, N318, 339-341, and N387 contribute to the NAD(+) site; these read GYGDVG and IGH.

It belongs to the adenosylhomocysteinase family. Requires NAD(+) as cofactor.

The protein resides in the cytoplasm. It catalyses the reaction S-adenosyl-L-homocysteine + H2O = L-homocysteine + adenosine. It participates in amino-acid biosynthesis; L-homocysteine biosynthesis; L-homocysteine from S-adenosyl-L-homocysteine: step 1/1. In terms of biological role, may play a key role in the regulation of the intracellular concentration of adenosylhomocysteine. The chain is Adenosylhomocysteinase from Chlorobium phaeobacteroides (strain DSM 266 / SMG 266 / 2430).